Consider the following 351-residue polypeptide: Cell shape-determining protein MreB (351 aa).

ATP contacts are provided by residues 20–22 (TAN), 169–171 (GGT), 217–220 (ERIK), and 299–302 (GGAL).

It belongs to the FtsA/MreB family. As to quaternary structure, forms polymers.

It is found in the cytoplasm. Functionally, forms membrane-associated dynamic filaments that are essential for cell shape determination. Acts by regulating cell wall synthesis and cell elongation, and thus cell shape. A feedback loop between cell geometry and MreB localization may maintain elongated cell shape by targeting cell wall growth to regions of negative cell wall curvature. This is Cell shape-determining protein MreB from Haemophilus influenzae (strain ATCC 51907 / DSM 11121 / KW20 / Rd).